The chain runs to 433 residues: Mitochondrial inner membrane protein OXA1L (433 aa).

Residues 1–108 lie on the Mitochondrial intermembrane side of the membrane; that stretch reads MARNLVCGRW…QCATEPSFTE (108 aa). A helical membrane pass occupies residues 109–129; that stretch reads LGLGSYTPVGLIQNLLEYIHV. The Mitochondrial matrix portion of the chain corresponds to 130-134; sequence DLGLP. Residues 135-155 traverse the membrane as a helical segment; the sequence is WWGAIATCTVLARCLVFPLIV. Over 156–207 the chain is Mitochondrial intermembrane; sequence KGQREAAKIHNHMPEMQKFSARIREAKLAGDQAEFYKATIEMTRYQKKHDIK. A helical membrane pass occupies residues 208–228; the sequence is LLRPLILPLTQAPVFISFFIA. At 229 to 255 the chain is on the mitochondrial matrix side; the sequence is LREMANLPVPSLQTGGLWWFQDLTVSD. The helical transmembrane segment at 256-276 threads the bilayer; it reads PIYVLPLVVTATMWCVLELGA. At 277–293 the chain is on the mitochondrial intermembrane side; the sequence is ETGVQSNDLQFMRNIIR. A helical transmembrane segment spans residues 294–314; that stretch reads VMPLVVLPVTIHFPSAVFMYW. Residues 315–433 are Mitochondrial matrix-facing; the sequence is LSSNVFSLCQ…AKKPWQDTLG (119 aa). Ser-359 bears the Phosphoserine mark. Phosphothreonine occurs at positions 395 and 397. The interval 397–433 is disordered; that stretch reads THNPLLQHDPSHPPKAPNSNNSSIKANAKKPWQDTLG. Residues 413–426 are compositionally biased toward low complexity; it reads PNSNNSSIKANAKK.

This sequence belongs to the OXA1/ALB3/YidC family. In terms of assembly, monomer; predominantly monomeric at low salt concentrations. Homooligomer; predominantly homooligomeric at high salt concentrations. Associates with the mitochondrial ribosome. Associates preferentially as a dimer with the large ribosomal subunit 39S of the mitochondrial ribosome. Interacts with OXA1L; promoting cotranslational quality control in mitochondria.

Its subcellular location is the mitochondrion inner membrane. In terms of biological role, mitochondrial membrane insertase that mediates the cotranslational insertion of integral membrane proteins into the mitochondrial inner membrane. Essential for the activity and assembly of cytochrome oxidase. Required for the correct biogenesis of ATP synthase and complex I in mitochondria. This is Mitochondrial inner membrane protein OXA1L (Oxa1l) from Mus musculus (Mouse).